Consider the following 279-residue polypeptide: UTP--glucose-1-phosphate uridylyltransferase (279 aa).

The protein belongs to the UDPGP type 2 family.

The catalysed reaction is alpha-D-glucose 1-phosphate + UTP + H(+) = UDP-alpha-D-glucose + diphosphate. May play a role in stationary phase survival. This chain is UTP--glucose-1-phosphate uridylyltransferase (galU), found in Pseudomonas aeruginosa.